A 578-amino-acid chain; its full sequence is Arginine--tRNA ligase (578 aa).

Residues P123 to H133 carry the 'HIGH' region motif.

Belongs to the class-I aminoacyl-tRNA synthetase family. In terms of assembly, monomer.

The protein resides in the cytoplasm. The enzyme catalyses tRNA(Arg) + L-arginine + ATP = L-arginyl-tRNA(Arg) + AMP + diphosphate. The protein is Arginine--tRNA ligase of Hahella chejuensis (strain KCTC 2396).